Consider the following 821-residue polypeptide: Calpain-3 (821 aa).

A disordered region spans residues 1–37; that stretch reads MPTVISPTVAPRTGAEPRSPGPVPHPAQGKTTEAGGG. One can recognise a Calpain catalytic domain in the interval 74 to 417; it reads LYLDPEFPPD…FTKLEICNLT (344 aa). Residues Cys129, His334, and Asn358 contribute to the active site. A domain III region spans residues 418–586; the sequence is ADALESDKLQ…KRNLSEEAEN (169 aa). The interval 587-649 is linker; sequence TISVDRPVKK…RPGHTDQESE (63 aa). Positions 603–651 are disordered; the sequence is IFVSDRANSNKELGVDQEAEEGKDKTGPDKQGESPQPRPGHTDQESEEQ. The segment covering 622-634 has biased composition (basic and acidic residues); the sequence is EEGKDKTGPDKQG. 4 consecutive EF-hand domains span residues 649 to 683, 692 to 725, 722 to 757, and 787 to 821; these read EEQQ…VVNK, FTLE…KKIK, KKIK…AGFH, and VRLE…TMYA. Residues 650-820 form a domain IV region; sequence EQQQFRNIFR…VLEWLQLTMY (171 aa). Positions 662, 665, 667, 672, 705, 707, 709, 711, 716, 735, 737, 739, 741, 746, 800, 802, 804, and 806 each coordinate Ca(2+).

The protein belongs to the peptidase C2 family. In terms of assembly, homodimer; via EF-hand domain 4. Interacts with TTN/titin. Interacts with CMYA5; this interaction, which results in CMYA5 proteolysis, may protect CAPN3 from autolysis. Interacts with SIMC1. Interacts with UTP25; the interaction is required for CAPN3 translocation to the nucleolus. In terms of tissue distribution, skeletal muscle.

The protein resides in the cytoplasm. The protein localises to the nucleus. It localises to the nucleolus. The enzyme catalyses Broad endopeptidase activity.. With respect to regulation, activated by micromolar concentrations of calcium and inhibited by calpastatin. Calcium-regulated non-lysosomal thiol-protease. Proteolytically cleaves CTBP1 at 'His-399'. Mediates, with UTP25, the proteasome-independent degradation of p53/TP53. In Rattus norvegicus (Rat), this protein is Calpain-3 (Capn3).